The following is a 406-amino-acid chain: Putative colanic acid biosynthesis glycosyltransferase WcaL (406 aa).

It belongs to the glycosyltransferase group 1 family. Glycosyltransferase 4 subfamily.

It functions in the pathway slime biogenesis; slime polysaccharide biosynthesis. In Escherichia coli (strain K12), this protein is Putative colanic acid biosynthesis glycosyltransferase WcaL (wcaL).